Consider the following 201-residue polypeptide: Peptidyl-tRNA hydrolase (201 aa).

Tyrosine 15 is a binding site for tRNA. The Proton acceptor role is filled by histidine 20. TRNA contacts are provided by tyrosine 66, asparagine 68, and asparagine 114.

It belongs to the PTH family. In terms of assembly, monomer.

It is found in the cytoplasm. It catalyses the reaction an N-acyl-L-alpha-aminoacyl-tRNA + H2O = an N-acyl-L-amino acid + a tRNA + H(+). Hydrolyzes ribosome-free peptidyl-tRNAs (with 1 or more amino acids incorporated), which drop off the ribosome during protein synthesis, or as a result of ribosome stalling. Its function is as follows. Catalyzes the release of premature peptidyl moieties from peptidyl-tRNA molecules trapped in stalled 50S ribosomal subunits, and thus maintains levels of free tRNAs and 50S ribosomes. The protein is Peptidyl-tRNA hydrolase of Burkholderia thailandensis (strain ATCC 700388 / DSM 13276 / CCUG 48851 / CIP 106301 / E264).